Consider the following 215-residue polypeptide: Imidazole glycerol phosphate synthase subunit HisH (215 aa).

A Glutamine amidotransferase type-1 domain is found at 9-215 (EVVLVDYGLG…QNFVDYCLER (207 aa)). Cys-85 (nucleophile) is an active-site residue. Catalysis depends on residues His-193 and Glu-195.

In terms of assembly, heterodimer of HisH and HisF.

It localises to the cytoplasm. The enzyme catalyses 5-[(5-phospho-1-deoxy-D-ribulos-1-ylimino)methylamino]-1-(5-phospho-beta-D-ribosyl)imidazole-4-carboxamide + L-glutamine = D-erythro-1-(imidazol-4-yl)glycerol 3-phosphate + 5-amino-1-(5-phospho-beta-D-ribosyl)imidazole-4-carboxamide + L-glutamate + H(+). It catalyses the reaction L-glutamine + H2O = L-glutamate + NH4(+). It participates in amino-acid biosynthesis; L-histidine biosynthesis; L-histidine from 5-phospho-alpha-D-ribose 1-diphosphate: step 5/9. In terms of biological role, IGPS catalyzes the conversion of PRFAR and glutamine to IGP, AICAR and glutamate. The HisH subunit catalyzes the hydrolysis of glutamine to glutamate and ammonia as part of the synthesis of IGP and AICAR. The resulting ammonia molecule is channeled to the active site of HisF. In Natronomonas pharaonis (strain ATCC 35678 / DSM 2160 / CIP 103997 / JCM 8858 / NBRC 14720 / NCIMB 2260 / Gabara) (Halobacterium pharaonis), this protein is Imidazole glycerol phosphate synthase subunit HisH.